The primary structure comprises 475 residues: SAM50-like protein SPAC17C9.06 (475 aa).

A POTRA domain is found at 44–130; sequence VGISSIRVTG…LDVTIQVKEK (87 aa).

The protein belongs to the SAM50/omp85 family. In terms of assembly, associates with the mitochondrial contact site and cristae organizing system (MICOS) complex (also known as MINOS or MitOS complex).

It is found in the mitochondrion outer membrane. Its function is as follows. May be required for the assembly pathway of mitochondrial outer membrane proteins. The polypeptide is SAM50-like protein SPAC17C9.06 (Schizosaccharomyces pombe (strain 972 / ATCC 24843) (Fission yeast)).